We begin with the raw amino-acid sequence, 295 residues long: Bis(5'-nucleosyl)-tetraphosphatase, symmetrical (295 aa).

Residues 271–295 (LSIEHPRHTHTPRRKAKKRHKRSPK) form a disordered region. Basic residues predominate over residues 277-295 (RHTHTPRRKAKKRHKRSPK).

The protein belongs to the Ap4A hydrolase family.

It catalyses the reaction P(1),P(4)-bis(5'-adenosyl) tetraphosphate + H2O = 2 ADP + 2 H(+). Hydrolyzes diadenosine 5',5'''-P1,P4-tetraphosphate to yield ADP. In Xylella fastidiosa (strain M23), this protein is Bis(5'-nucleosyl)-tetraphosphatase, symmetrical.